Here is a 287-residue protein sequence, read N- to C-terminus: Ret finger protein-like 4A (287 aa).

The segment at 11–53 (CPVCLKDLEEAVQLKCGYACCLQCLNSLQKEPDGEGLLCRFCS) adopts an RING-type; degenerate zinc-finger fold. A B30.2/SPRY domain is found at 78–276 (EPKLKSVLTM…LSICSVINPS (199 aa)).

Interacts with PSMB1, UBE2A and CCNB1.

The protein localises to the cytoplasm. It localises to the nucleus. This chain is Ret finger protein-like 4A (RFPL4A), found in Homo sapiens (Human).